The chain runs to 262 residues: Ribosome-recycling factor, mitochondrial (262 aa).

The transit peptide at 1 to 55 directs the protein to the mitochondrion; that stretch reads MALGIRCFRLLHPAFSSYLADLSRPVSEVPMKTVRGRQRDHIQYSAHPAVPVRQF.

The protein belongs to the RRF family.

Its subcellular location is the mitochondrion. Its function is as follows. Responsible for the disassembly of ribosomes from messenger RNA at the termination of mitochondrial protein biosynthesis. Acts in collaboration with GFM2. Promotes mitochondrial ribosome recycling by dissolution of intersubunit contacts. The polypeptide is Ribosome-recycling factor, mitochondrial (Mrrf) (Rattus norvegicus (Rat)).